The primary structure comprises 420 residues: Probable ABC transporter-binding protein DR_1438 (420 aa).

Residues 1 to 24 (MKKFAAVLGLTVAFAAASQAHAVT) form the signal peptide.

It belongs to the bacterial solute-binding protein 1 family.

Probably part of a binding-protein-dependent transport system. The chain is Probable ABC transporter-binding protein DR_1438 from Deinococcus radiodurans (strain ATCC 13939 / DSM 20539 / JCM 16871 / CCUG 27074 / LMG 4051 / NBRC 15346 / NCIMB 9279 / VKM B-1422 / R1).